Consider the following 125-residue polypeptide: Small ribosomal subunit protein uS11 (125 aa).

Positions 101–125 are disordered; the sequence is KDVKDVTPTPHNGTRPPKKILKREK. A compositionally biased stretch (basic residues) spans 116–125; sequence PPKKILKREK.

It belongs to the universal ribosomal protein uS11 family. In terms of assembly, part of the 30S ribosomal subunit. Interacts with proteins S7 and S18. Binds to IF-3.

In terms of biological role, located on the platform of the 30S subunit, it bridges several disparate RNA helices of the 16S rRNA. Forms part of the Shine-Dalgarno cleft in the 70S ribosome. The chain is Small ribosomal subunit protein uS11 from Mycoplasma sp.